Consider the following 429-residue polypeptide: Phosphomethylpyrimidine synthase (429 aa).

Substrate contacts are provided by residues Asn66, Met94, Tyr123, His162, 184–186, 225–228, and Glu264; these read SRG and DALR. His268 lines the Zn(2+) pocket. Position 291 (Tyr291) interacts with substrate. His332 provides a ligand contact to Zn(2+). [4Fe-4S] cluster is bound by residues Cys408, Cys411, and Cys415.

This sequence belongs to the ThiC family. It depends on [4Fe-4S] cluster as a cofactor.

The catalysed reaction is 5-amino-1-(5-phospho-beta-D-ribosyl)imidazole + S-adenosyl-L-methionine = 4-amino-2-methyl-5-(phosphooxymethyl)pyrimidine + CO + 5'-deoxyadenosine + formate + L-methionine + 3 H(+). The protein operates within cofactor biosynthesis; thiamine diphosphate biosynthesis. Its function is as follows. Catalyzes the synthesis of the hydroxymethylpyrimidine phosphate (HMP-P) moiety of thiamine from aminoimidazole ribotide (AIR) in a radical S-adenosyl-L-methionine (SAM)-dependent reaction. The polypeptide is Phosphomethylpyrimidine synthase (Sulfurisphaera tokodaii (strain DSM 16993 / JCM 10545 / NBRC 100140 / 7) (Sulfolobus tokodaii)).